We begin with the raw amino-acid sequence, 430 residues long: Probable carboxypeptidase AFLA_037450 (430 aa).

An N-terminal signal peptide occupies residues 1–16; the sequence is MKSIYSLVLCTALTAA. The N-linked (GlcNAc...) asparagine glycan is linked to Asn-84. Zn(2+) is bound at residue Asp-156. The active-site Proton acceptor is Glu-188. Position 189 (Glu-189) interacts with Zn(2+). N-linked (GlcNAc...) asparagine glycosylation is present at Asn-285.

It belongs to the peptidase M20A family. Zn(2+) is required as a cofactor.

The protein localises to the secreted. This Aspergillus flavus (strain ATCC 200026 / FGSC A1120 / IAM 13836 / NRRL 3357 / JCM 12722 / SRRC 167) protein is Probable carboxypeptidase AFLA_037450.